Reading from the N-terminus, the 449-residue chain is Neuraminidase (449 aa).

Over 1–6 (MNPNQK) the chain is Intravirion. A helical transmembrane segment spans residues 7–34 (IITIGSICMVTGIVSLMLQIGNMISIWV). Residues 11 to 33 (GSICMVTGIVSLMLQIGNMISIW) are involved in apical transport and lipid raft association. The Virion surface portion of the chain corresponds to 35–449 (SHSIHTGNQH…GAELPFTIDK (415 aa)). Positions 36–70 (HSIHTGNQHQSEPISNTNFLTEKAVASVKLAGNSS) are hypervariable stalk region. A head of neuraminidase region spans residues 71–449 (LCPINGWAVY…GAELPFTIDK (379 aa)). Cystine bridges form between Cys-72–Cys-397, Cys-104–Cys-109, Cys-164–Cys-211, Cys-213–Cys-218, Cys-259–Cys-272, Cys-261–Cys-270, Cys-298–Cys-315, and Cys-401–Cys-426. Arg-98 is a substrate binding site. Asp-131 functions as the Proton donor/acceptor in the catalytic mechanism. Residue Arg-132 coordinates substrate. Substrate is bound at residue 257-258 (EE). Arg-273 provides a ligand contact to substrate. Ca(2+)-binding residues include Asp-274, Gly-278, Asp-304, Gly-322, and Tyr-324. Substrate is bound at residue Arg-348. Residue Tyr-382 is the Nucleophile of the active site.

This sequence belongs to the glycosyl hydrolase 34 family. In terms of assembly, homotetramer. Ca(2+) is required as a cofactor. Post-translationally, N-glycosylated.

The protein localises to the virion membrane. It localises to the host apical cell membrane. The catalysed reaction is Hydrolysis of alpha-(2-&gt;3)-, alpha-(2-&gt;6)-, alpha-(2-&gt;8)- glycosidic linkages of terminal sialic acid residues in oligosaccharides, glycoproteins, glycolipids, colominic acid and synthetic substrates.. Its activity is regulated as follows. Inhibited by the neuraminidase inhibitors zanamivir (Relenza) and oseltamivir (Tamiflu). These drugs interfere with the release of progeny virus from infected cells and are effective against all influenza strains. Resistance to neuraminidase inhibitors is quite rare. Functionally, catalyzes the removal of terminal sialic acid residues from viral and cellular glycoconjugates. Cleaves off the terminal sialic acids on the glycosylated HA during virus budding to facilitate virus release. Additionally helps virus spread through the circulation by further removing sialic acids from the cell surface. These cleavages prevent self-aggregation and ensure the efficient spread of the progeny virus from cell to cell. Otherwise, infection would be limited to one round of replication. Described as a receptor-destroying enzyme because it cleaves a terminal sialic acid from the cellular receptors. May facilitate viral invasion of the upper airways by cleaving the sialic acid moities on the mucin of the airway epithelial cells. Likely to plays a role in the budding process through its association with lipid rafts during intracellular transport. May additionally display a raft-association independent effect on budding. Plays a role in the determination of host range restriction on replication and virulence. Sialidase activity in late endosome/lysosome traffic seems to enhance virus replication. This chain is Neuraminidase, found in Influenza A virus (strain A/Vietnam/1203/2004 H5N1).